Consider the following 292-residue polypeptide: 4,5:9,10-diseco-3-hydroxy-5,9,17-trioxoandrosta-1(10),2-diene-4-oate hydrolase (292 aa).

Residues 44–45 (GG), N53, N113, and R192 contribute to the substrate site. H269 (proton acceptor) is an active-site residue. W270 lines the substrate pocket.

It belongs to the AB hydrolase superfamily. HsaD family. In terms of assembly, homodimer.

The enzyme catalyses (1E,2Z)-3-hydroxy-5,9,17-trioxo-4,5:9,10-disecoandrosta-1(10),2-dien-4-oate + H2O = 3-[(3aS,4S,7aS)-7a-methyl-1,5-dioxo-octahydro-1H-inden-4-yl]propanoate + (2Z,4Z)-2-hydroxyhexa-2,4-dienoate + H(+). The protein operates within lipid metabolism; steroid biosynthesis. In terms of biological role, catalyzes the hydrolysis of a carbon-carbon bond in 4,5: 9,10-diseco-3-hydroxy-5,9,17-trioxoandrosta-1(10),2-diene-4-oate (4,9-DSHA) to yield 9,17-dioxo-1,2,3,4,10,19-hexanorandrostan-5-oate (DOHNAA) and 2-hydroxy-hexa-2,4-dienoate (HHD). Also involved in biphenyl and polychlorinated biphenyls (PCBs) degradation. This chain is 4,5:9,10-diseco-3-hydroxy-5,9,17-trioxoandrosta-1(10),2-diene-4-oate hydrolase (hsaD), found in Rhodococcus jostii (strain RHA1).